The sequence spans 282 residues: Energy-coupling factor transporter ATP-binding protein EcfA1 (282 aa).

An ABC transporter domain is found at 6 to 243 (ISFDHVTFTY…VEMLKRIGLD (238 aa)). 40 to 47 (GHNGSGKS) is a binding site for ATP.

The protein belongs to the ABC transporter superfamily. Energy-coupling factor EcfA family. In terms of assembly, forms a stable energy-coupling factor (ECF) transporter complex composed of 2 membrane-embedded substrate-binding proteins (S component), 2 ATP-binding proteins (A component) and 2 transmembrane proteins (T component).

Its subcellular location is the cell membrane. ATP-binding (A) component of a common energy-coupling factor (ECF) ABC-transporter complex. Unlike classic ABC transporters this ECF transporter provides the energy necessary to transport a number of different substrates. The polypeptide is Energy-coupling factor transporter ATP-binding protein EcfA1 (Lactobacillus delbrueckii subsp. bulgaricus (strain ATCC BAA-365 / Lb-18)).